The chain runs to 227 residues: PKHD-type hydroxylase Bpro_3048 (227 aa).

In terms of domain architecture, Fe2OG dioxygenase spans 78–179 (KIFTPRINRY…RLACFFWVES (102 aa)). Fe cation is bound by residues His-97, Asp-99, and His-160. Arg-170 provides a ligand contact to 2-oxoglutarate.

Fe(2+) is required as a cofactor. Requires L-ascorbate as cofactor.

This chain is PKHD-type hydroxylase Bpro_3048, found in Polaromonas sp. (strain JS666 / ATCC BAA-500).